Reading from the N-terminus, the 311-residue chain is Ribosomal RNA small subunit methyltransferase H (311 aa).

S-adenosyl-L-methionine is bound by residues glycine 34–histidine 36, aspartate 54, phenylalanine 80, aspartate 104, and glutamine 111.

Belongs to the methyltransferase superfamily. RsmH family.

The protein resides in the cytoplasm. The catalysed reaction is cytidine(1402) in 16S rRNA + S-adenosyl-L-methionine = N(4)-methylcytidine(1402) in 16S rRNA + S-adenosyl-L-homocysteine + H(+). Functionally, specifically methylates the N4 position of cytidine in position 1402 (C1402) of 16S rRNA. In Teredinibacter turnerae (strain ATCC 39867 / T7901), this protein is Ribosomal RNA small subunit methyltransferase H.